Here is a 257-residue protein sequence, read N- to C-terminus: Large ribosomal subunit protein bL28m (257 aa).

The N-terminal 55 residues, 1-55 (MPLHRYPVHLWQKLRLRQGICARLPAHFLRSLEEERTPTPVHYKPHGTKFKINPK), are a transit peptide targeting the mitochondrion.

This sequence belongs to the bacterial ribosomal protein bL28 family. Component of the mitochondrial ribosome large subunit (39S) which comprises a 16S rRNA and about 50 distinct proteins. Interacts with OXA1L.

It is found in the mitochondrion. The protein is Large ribosomal subunit protein bL28m (Mrpl28) of Mus musculus (Mouse).